A 647-amino-acid chain; its full sequence is MAKIIGIDLGTTNSCVAVMENNKPKVIENAEGTRTTPSIVAYAEDNEVLVGASAKRQAVTNPENTLFAIKRLIGRKFDEEVVQKDISVTPYKIVRADNNDAWIEVRGRKIAPPEVSAQVLMKMKKTAEDYLGESVTEAVITVPAYFNDSQRQATKDAGRIAGLEVKRIINEPTAAALAFGMDKKEGDRKIAVYDLGGGTFDISIIEIAEIEGEHQFEVLATNGDTFLGGEDFDSSVISYLVEEFRKESGIDLKKDMLALQRLKDAAEKAKIELSSSQQTEVNLPYITADASGPKHLAVKITRAKLESLVEELIERTAGPCRTALKDAGLSVSDIDDVILVGGQTRMPKVQDKVKEIFGKEPRKDVNPDEAVAIGAAIQGGVLQGDVKDVLLLDVTPLSLGIETLGGVMTKLIQKNTTIPTKAQQIFSTAEDSQTAVTIHVLQGEREMASGNKSLGQFNLTDIPPAQRGMPQIEVTFDIDANGILHVSAKDKATGKENKIKIQASSGLSEDEIQKMVKDAETHAEEDKKALELVNSRNQCDAMIHSVKKSLTEYGDKLEADEKSKIEAALKDAEEALKSGDKEAIDAKTQVLTEASHKLAEKMYAQEQAQAGQQAGPGAGSASAGQSGEKPVEGEVVDAEFEEVKDKK.

Thr199 carries the post-translational modification Phosphothreonine; by autocatalysis. Residues 602-647 are disordered; the sequence is MYAQEQAQAGQQAGPGAGSASAGQSGEKPVEGEVVDAEFEEVKDKK. The segment covering 604 to 627 has biased composition (low complexity); the sequence is AQEQAQAGQQAGPGAGSASAGQSG.

The protein belongs to the heat shock protein 70 family.

Acts as a chaperone. The chain is Chaperone protein DnaK from Nitrosomonas eutropha (strain DSM 101675 / C91 / Nm57).